The chain runs to 60 residues: Beta-defensin 8 (60 aa).

The first 22 residues, M1–S22, serve as a signal peptide directing secretion. Positions Q23–I25 are excised as a propeptide. 3 disulfides stabilise this stretch: C31–C58, C38–C52, and C42–C59.

Belongs to the beta-defensin family. Most highly expressed in testis and heart.

The protein resides in the secreted. In terms of biological role, a synthetic peptide displays antimicrobial activities against S.aureus, P.aeruginosa, E.coli and B.cepacia. The antimicrobial activity against S.aureus, E.coli and B.cepacia is reduced in raised concentration of NaCl, but its action against P.aeruginosa is independent of NaCl concentration. The chain is Beta-defensin 8 (Defb8) from Mus musculus (Mouse).